Here is a 159-residue protein sequence, read N- to C-terminus: Probable minor fimbrial protein (159 aa).

A propeptide spans 1–6 (MKKMHG) (leader sequence). F7 bears the N-methylphenylalanine mark. A helical transmembrane segment spans residues 7 to 29 (FTLIELMIVVAIIGVLASIALMQ). 2 cysteine pairs are disulfide-bonded: C56/C71 and C140/C153.

Belongs to the N-Me-Phe pilin family. In terms of assembly, the pili are polar flexible filaments of about 5.4 nanometers diameter and 2.5 micrometers average length; they consist of only a single polypeptide chain arranged in a helical configuration of five subunits per turn in the assembled pilus.

The protein localises to the fimbrium. It is found in the membrane. The sequence is that of Probable minor fimbrial protein (fimZ) from Dichelobacter nodosus (Bacteroides nodosus).